Consider the following 541-residue polypeptide: Kinesin light chain 1 (541 aa).

The stretch at 27-156 forms a coiled coil; sequence KTKQVIQGLE…HLEFMNQLKK (130 aa). A compositionally biased stretch (basic and acidic residues) spans 156 to 176; sequence KYDDDISPSEDKDSDSSKEPL. The disordered stretch occupies residues 156–201; that stretch reads KYDDDISPSEDKDSDSSKEPLDDLFPNDEDEPGQGIQHSDSSAAAA. S162 is modified (phosphoserine). TPR repeat units follow at residues 211–244, 253–286, 295–328, 337–370, and 380–413; these read LRTL…LEKT, ATML…REKT, AATL…REKV, AKQL…YQTK, and AKTK…AHEA. At Y448 the chain carries Phosphotyrosine. At S459 the chain carries Phosphoserine. A TPR 6 repeat occupies 463–496; the sequence is TTTLKNLGALYRRQGKFEAAETLEEAAMRSRKQG. The tract at residues 493-541 is disordered; sequence RKQGLDNVHKQRVAEVLNDPESMEKRRSRESLNMDVVKYESGPDGGEEA. Composition is skewed to basic and acidic residues over residues 495–505 and 514–524; these read QGLDNVHKQRV and SMEKRRSRESL. S520 and S523 each carry phosphoserine; by AMPK.

The protein belongs to the kinesin light chain family. In terms of assembly, oligomeric complex composed of two heavy chains and two light chains. Interacts with SPAG9. Interacts with ATCAY; may link mitochondria to KLC1 and regulate mitochondria localization into neuron projections. Interacts (via TPR repeats) with TOR1A; the interaction associates TOR1A with the kinesin oligomeric complex. Interacts with BORCS5. Interacts with MAPK8IP3/JIP3 and NTRK2/TRKB; interaction with NTRK2/TRKB is mediated by MAPK8IP3/JIP3. Interacts with CLSTN1; phosphorylation at Ser-459 inhibits interaction with CLSTN1. In terms of processing, phosphorylation at Ser-459 by ERK inhibits interaction with CLSTN1 and localization to cytoplasmic vesicles.

The protein localises to the cell projection. The protein resides in the growth cone. It localises to the cytoplasmic vesicle. It is found in the cytoplasm. Its subcellular location is the cytoskeleton. Kinesin is a microtubule-associated force-producing protein that may play a role in organelle transport. The light chain may function in coupling of cargo to the heavy chain or in the modulation of its ATPase activity. The polypeptide is Kinesin light chain 1 (Klc1) (Mus musculus (Mouse)).